Consider the following 291-residue polypeptide: Phosphatidylglycerol--prolipoprotein diacylglyceryl transferase (291 aa).

The next 7 helical transmembrane spans lie at 21–41, 60–80, 96–116, 124–144, 198–218, 225–245, and 258–278; these read IALH…MWLA, LLYA…VLFY, WDGG…MWWF, FLQV…MGRI, SQLY…NLYI, GSVS…VEFF, and ISMG…MMIW. Arginine 143 contributes to the a 1,2-diacyl-sn-glycero-3-phospho-(1'-sn-glycerol) binding site.

This sequence belongs to the Lgt family.

It is found in the cell inner membrane. It catalyses the reaction L-cysteinyl-[prolipoprotein] + a 1,2-diacyl-sn-glycero-3-phospho-(1'-sn-glycerol) = an S-1,2-diacyl-sn-glyceryl-L-cysteinyl-[prolipoprotein] + sn-glycerol 1-phosphate + H(+). It participates in protein modification; lipoprotein biosynthesis (diacylglyceryl transfer). In terms of biological role, catalyzes the transfer of the diacylglyceryl group from phosphatidylglycerol to the sulfhydryl group of the N-terminal cysteine of a prolipoprotein, the first step in the formation of mature lipoproteins. The polypeptide is Phosphatidylglycerol--prolipoprotein diacylglyceryl transferase (Photorhabdus laumondii subsp. laumondii (strain DSM 15139 / CIP 105565 / TT01) (Photorhabdus luminescens subsp. laumondii)).